The chain runs to 686 residues: Restriction of telomere capping protein 5 (686 aa).

Over residues 155–176 the composition is skewed to basic and acidic residues; it reads EQDTKKQNDSAESASKSEDSKQ. Disordered stretches follow at residues 155-198, 326-355, and 522-559; these read EQDT…EHED, SRKQTGQSEPSPESPPSEAPTDANIDEKPT, and QQHRTSYGPGVPSPHQQPHRRQSSTNHKQQQGPLPHGA. Over residues 188-198 the composition is skewed to acidic residues; sequence PTNDDYEEHED. The TLDc domain maps to 366–610; sequence AILTPSMVSH…IYNLEIWGII (245 aa). A compositionally biased stretch (polar residues) spans 544-553; the sequence is SSTNHKQQQG.

Belongs to the RTC5 family.

It is found in the cytoplasm. Functionally, may be involved in a process influencing telomere capping. In Talaromyces stipitatus (strain ATCC 10500 / CBS 375.48 / QM 6759 / NRRL 1006) (Penicillium stipitatum), this protein is Restriction of telomere capping protein 5 (rtc5).